Here is a 631-residue protein sequence, read N- to C-terminus: tRNA uridine 5-carboxymethylaminomethyl modification enzyme MnmG (631 aa).

FAD contacts are provided by residues G13–G18, V125, and S180. Position 273-287 (G273–F287) interacts with NAD(+). Q370 contributes to the FAD binding site.

It belongs to the MnmG family. As to quaternary structure, homodimer. Heterotetramer of two MnmE and two MnmG subunits. FAD serves as cofactor.

Its subcellular location is the cytoplasm. NAD-binding protein involved in the addition of a carboxymethylaminomethyl (cmnm) group at the wobble position (U34) of certain tRNAs, forming tRNA-cmnm(5)s(2)U34. The polypeptide is tRNA uridine 5-carboxymethylaminomethyl modification enzyme MnmG (Vibrio atlanticus (strain LGP32) (Vibrio splendidus (strain Mel32))).